We begin with the raw amino-acid sequence, 569 residues long: Adenine deaminase (569 aa).

It belongs to the metallo-dependent hydrolases superfamily. Adenine deaminase family. Requires Mn(2+) as cofactor.

It carries out the reaction adenine + H2O + H(+) = hypoxanthine + NH4(+). The sequence is that of Adenine deaminase from Desulfatibacillum aliphaticivorans.